Consider the following 292-residue polypeptide: Elongation factor Ts (292 aa).

Residues 82 to 85 (TDFV) form an involved in Mg(2+) ion dislocation from EF-Tu region.

The protein belongs to the EF-Ts family.

Its subcellular location is the cytoplasm. Functionally, associates with the EF-Tu.GDP complex and induces the exchange of GDP to GTP. It remains bound to the aminoacyl-tRNA.EF-Tu.GTP complex up to the GTP hydrolysis stage on the ribosome. The polypeptide is Elongation factor Ts (Legionella pneumophila subsp. pneumophila (strain Philadelphia 1 / ATCC 33152 / DSM 7513)).